Consider the following 229-residue polypeptide: GTP-binding protein Di-Ras3 (229 aa).

GTP contacts are provided by residues 44–51, 63–69, 91–95, 152–155, and 182–183; these read GTAGVGKS, RHEYLPT, DSKSG, NKSD, and AK. The Effector region motif lies at 66-74; it reads YLPTIENTY. Residue Cys-226 is modified to Cysteine methyl ester. The S-geranylgeranyl cysteine moiety is linked to residue Cys-226. Positions 227–229 are cleaved as a propeptide — removed in mature form; that stretch reads IIM.

Belongs to the small GTPase superfamily. Di-Ras family. Expressed in normal ovarian and breast epithelial cells but not in ovarian and breast cancers.

Its subcellular location is the cell membrane. This Homo sapiens (Human) protein is GTP-binding protein Di-Ras3 (DIRAS3).